The following is a 573-amino-acid chain: MAVPKESIPSLLECQCQICVEILFEPVTLPCNHTLCKPCFESTVEKASLCCPFCRRRVSSWARYRSRTNSLVNMELWEIIQKHYPKECKLRASGQESKEIVDDYQPVRLLSKPGELRREYEEEISKVEAERRACEEEENKASEEYIQKLLAEEEEEEKRQAEKRHREMEEQLKSDEELARRLSLDINNFCEGSVLASPLNSRKSDPVTTKSQKKSKNKQTNTGDIQKYLSPKSQLGSASQSEVVQEDRKSSMSKKIDDNSDVKSPTWQDTEVEEDMPTLSPQIYLEVQEQGAKSSVESPMPQLYTSDGEWYLEGKVETGPSNHEKGLCVINLEEPKARVPYSGDAATEPCGETESECTVSYMTQFLRNNTVGTENEESHLQISKGTSKRRNLEPLSEAIREPCFSAKRRKMFPKASSDQEETEISLTQKLIDLEHLLFERHKQEKQDRLLALQLQEEVDQEQMRPDRQKGSPDGYQLRTVSSPPDKVLNGQRKNSRDRNSKRQTELEQPKPRTDSKNENHQQPSFKIQLKCSVNRRKIANSTNDNCNVSKTAHSLQPSKSQKSIFQMFQRVTK.

The RING-type zinc-finger motif lies at 16-55 (CQICVEILFEPVTLPCNHTLCKPCFESTVEKASLCCPFCR). A Phosphoserine modification is found at Ser-70. The LR motif 1 signature appears at 110 to 128 (LSKPGELRREYEEEISKVE). Residues 143–151 (EEYIQKLLA) carry the UMI motif motif. Disordered stretches follow at residues 153 to 174 (EEEE…QLKS) and 196 to 277 (ASPL…EDMP). Residues 157–174 (EKRQAEKRHREMEEQLKS) show a composition bias toward basic and acidic residues. Positions 168–191 (MEEQLKSDEELARRLSLDINNFCE) match the MIU motif 1 motif. Ser-197 is modified (phosphoserine). A Glycyl lysine isopeptide (Lys-Gly) (interchain with G-Cter in SUMO2) cross-link involves residue Lys-210. The segment covering 231–243 (PKSQLGSASQSEV) has biased composition (polar residues). The span at 245-261 (QEDRKSSMSKKIDDNSD) shows a compositional bias: basic and acidic residues. A Phosphothreonine modification is found at Thr-363. Ser-416 is subject to Phosphoserine. The MIU motif 2 signature appears at 440–463 (RHKQEKQDRLLALQLQEEVDQEQM). Residues 456–528 (EEVDQEQMRP…NHQQPSFKIQ (73 aa)) are disordered. The segment covering 461–470 (EQMRPDRQKG) has biased composition (basic and acidic residues). Positions 467-478 (RQKGSPDGYQLR) match the LR motif 2 motif. Ser-471 bears the Phosphoserine mark. Positions 494 to 519 (NSRDRNSKRQTELEQPKPRTDSKNEN) are enriched in basic and acidic residues. A Glycyl lysine isopeptide (Lys-Gly) (interchain with G-Cter in SUMO2) cross-link involves residue Lys-530. The segment at 540-573 (NSTNDNCNVSKTAHSLQPSKSQKSIFQMFQRVTK) is disordered.

Belongs to the RNF168 family. In terms of assembly, monomer. Interacts with UBE2N/UBC13. Post-translationally, sumoylated with SUMO1 by PIAS4 in response to double-strand breaks (DSBs). Ubiquitinated.

It localises to the nucleus. The catalysed reaction is S-ubiquitinyl-[E2 ubiquitin-conjugating enzyme]-L-cysteine + [acceptor protein]-L-lysine = [E2 ubiquitin-conjugating enzyme]-L-cysteine + N(6)-ubiquitinyl-[acceptor protein]-L-lysine.. The protein operates within protein modification; protein ubiquitination. Its function is as follows. E3 ubiquitin-protein ligase required for accumulation of repair proteins to sites of DNA damage. Acts with UBE2N/UBC13 to amplify the RNF8-dependent histone ubiquitination. Recruited to sites of DNA damage at double-strand breaks (DSBs) by binding to ubiquitinated histone H2A and H2AX and amplifies the RNF8-dependent H2A ubiquitination, promoting the formation of 'Lys-63'-linked ubiquitin conjugates. This leads to concentrate ubiquitinated histones H2A and H2AX at DNA lesions to the threshold required for recruitment of TP53BP1 and BRCA1. Also recruited at DNA interstrand cross-links (ICLs) sites and promotes accumulation of 'Lys-63'-linked ubiquitination of histones H2A and H2AX, leading to recruitment of FAAP20 and Fanconi anemia (FA) complex, followed by interstrand cross-link repair. H2A ubiquitination also mediates the ATM-dependent transcriptional silencing at regions flanking DSBs in cis, a mechanism to avoid collision between transcription and repair intermediates. Also involved in class switch recombination in immune system, via its role in regulation of DSBs repair. Following DNA damage, promotes the ubiquitination and degradation of JMJD2A/KDM4A in collaboration with RNF8, leading to unmask H4K20me2 mark and promote the recruitment of TP53BP1 at DNA damage sites. Not able to initiate 'Lys-63'-linked ubiquitination in vitro; possibly due to partial occlusion of the UBE2N/UBC13-binding region. Catalyzes monoubiquitination of 'Lys-13' and 'Lys-15' of nucleosomal histone H2A (H2AK13Ub and H2AK15Ub, respectively). The polypeptide is E3 ubiquitin-protein ligase RNF168 (Bos taurus (Bovine)).